Consider the following 397-residue polypeptide: pH-sensitive adenylate cyclase MT1302 (397 aa).

A regulatory domain region spans residues 1–191; that stretch reads MTDHVREADD…IQDMLFMQLR (191 aa). The tract at residues 192 to 206 is linker; sequence HMMETEAVNAGERAA. The segment at 211-397 is catalytic domain; sequence PGARQVTVAF…QDDDLAGSSP (187 aa). In terms of domain architecture, Guanylate cyclase spans 217 to 325; it reads TVAFADLVGF…SPVNVASRVT (109 aa). Mn(2+) is bound at residue D222. Residue K261 coordinates substrate. A Mn(2+)-binding site is contributed by D265. R298 provides a ligand contact to ATP. Residue D312 coordinates substrate.

This sequence belongs to the adenylyl cyclase class-4/guanylyl cyclase family. Homodimer. It depends on Mn(2+) as a cofactor. The cofactor is Mg(2+).

The enzyme catalyses ATP = 3',5'-cyclic AMP + diphosphate. In terms of biological role, catalyzes the formation of the second messenger cAMP. This chain is pH-sensitive adenylate cyclase MT1302, found in Mycobacterium tuberculosis (strain CDC 1551 / Oshkosh).